We begin with the raw amino-acid sequence, 355 residues long: Enhancer of mRNA-decapping protein 1 (355 aa).

Disordered stretches follow at residues 1–146 (MSSD…VDGM), 210–230 (MSQP…SQPM), and 301–330 (NSTA…KSSQ). The span at 39 to 49 (AQKQQLPNGEQ) shows a compositional bias: polar residues. Residues 57–67 (KQSRKRGSGRQ) are compositionally biased toward basic residues. The segment covering 91-110 (SIPSGSAGSESAQKETSAGQ) has biased composition (polar residues). A compositionally biased stretch (low complexity) spans 123-142 (VPAGGPAGKSSSEPASASSA).

This sequence belongs to the EDC family.

It is found in the cytoplasm. Its function is as follows. mRNA-binding protein which stimulates mRNA decapping. This Eremothecium gossypii (strain ATCC 10895 / CBS 109.51 / FGSC 9923 / NRRL Y-1056) (Yeast) protein is Enhancer of mRNA-decapping protein 1 (EDC1).